Consider the following 473-residue polypeptide: Probable lipid II flippase MurJ (473 aa).

13 helical membrane passes run 31–51 (TFGA…PFFL), 90–110 (LVTL…ASIF), 125–145 (LIRL…FYSV), 153–173 (FLPA…CLFG), 177–197 (WAAA…LPFG), 215–235 (FFGT…DVNV), 253–273 (LYQL…LSTL), 300–320 (IGLM…GAFT), 327–347 (SAQI…FNLL), 360–380 (PFFA…ILGF), 382–402 (MGAS…FVFL), 414–434 (IFKI…LRGS), and 439–459 (LGTI…SKLL).

Belongs to the MurJ/MviN family.

Its subcellular location is the cell inner membrane. It participates in cell wall biogenesis; peptidoglycan biosynthesis. Involved in peptidoglycan biosynthesis. Transports lipid-linked peptidoglycan precursors from the inner to the outer leaflet of the cytoplasmic membrane. The chain is Probable lipid II flippase MurJ from Thermotoga maritima (strain ATCC 43589 / DSM 3109 / JCM 10099 / NBRC 100826 / MSB8).